Reading from the N-terminus, the 249-residue chain is 2,3-bisphosphoglycerate-dependent phosphoglycerate mutase (249 aa).

Residues 8 to 15 (RHGQSVWN), 21 to 22 (TG), arginine 60, 87 to 90 (ERHY), lysine 98, 114 to 115 (RR), and 183 to 184 (GN) each bind substrate. Catalysis depends on histidine 9, which acts as the Tele-phosphohistidine intermediate. Glutamate 87 functions as the Proton donor/acceptor in the catalytic mechanism.

Belongs to the phosphoglycerate mutase family. BPG-dependent PGAM subfamily. Homodimer.

The catalysed reaction is (2R)-2-phosphoglycerate = (2R)-3-phosphoglycerate. It functions in the pathway carbohydrate degradation; glycolysis; pyruvate from D-glyceraldehyde 3-phosphate: step 3/5. Catalyzes the interconversion of 2-phosphoglycerate and 3-phosphoglycerate. This chain is 2,3-bisphosphoglycerate-dependent phosphoglycerate mutase, found in Solidesulfovibrio magneticus (strain ATCC 700980 / DSM 13731 / RS-1) (Desulfovibrio magneticus).